The sequence spans 707 residues: DNA ligase (707 aa).

Residues 48 to 52, 97 to 98, and Glu-134 contribute to the NAD(+) site; these read DAEYD and SI. Lys-136 serves as the catalytic N6-AMP-lysine intermediate. The NAD(+) site is built by Arg-157, Glu-193, Lys-320, and Lys-344. Residues Cys-438, Cys-441, Cys-456, and Cys-462 each coordinate Zn(2+). The BRCT domain occupies 621–707; it reads VAPKPLSGKT…DSPPDERIPA (87 aa).

It belongs to the NAD-dependent DNA ligase family. LigA subfamily. It depends on Mg(2+) as a cofactor. Mn(2+) is required as a cofactor.

The enzyme catalyses NAD(+) + (deoxyribonucleotide)n-3'-hydroxyl + 5'-phospho-(deoxyribonucleotide)m = (deoxyribonucleotide)n+m + AMP + beta-nicotinamide D-nucleotide.. Functionally, DNA ligase that catalyzes the formation of phosphodiester linkages between 5'-phosphoryl and 3'-hydroxyl groups in double-stranded DNA using NAD as a coenzyme and as the energy source for the reaction. It is essential for DNA replication and repair of damaged DNA. The polypeptide is DNA ligase (Polaromonas naphthalenivorans (strain CJ2)).